Consider the following 118-residue polypeptide: MAPLVALVLLGLLSLSGLDAVARPPKVQVYSRHPAENGKPNYLNCYVSGFHPPQIEIDLLKNGEKMNAEQSDLSFSKDWSFYLLVHTEFTPNAVDQYSCRVKHVTLDKPKIVKWDRDH.

The N-terminal stretch at M1–A20 is a signal peptide. One can recognise an Ig-like C1-type domain in the interval P25 to V112. A disulfide bond links C45 and C99.

Belongs to the beta-2-microglobulin family. Heterodimer of an alpha chain and a beta chain. Beta-2-microglobulin is the beta-chain of major histocompatibility complex class I molecules.

The protein resides in the secreted. Functionally, component of the class I major histocompatibility complex (MHC). Involved in the presentation of peptide antigens to the immune system. The chain is Beta-2-microglobulin (B2M) from Sus scrofa (Pig).